A 294-amino-acid chain; its full sequence is MPFIKAVKSSPYFSRYQTKYRRRREGKTDYYARKRLIAQAKNKYNAPKYRLVVRFSNRFVTCQIVSSRVNGDYVLAHAHSSELPRYGIKWGLANWTAAYATGLLVARRALAKVGLADKYEGVTEPEGEFELTEAIEDGPRPFKVFLDVGLKRTSTGSRVFGAMKGASDGGLFIPHSPNRFPGFDIETEELDDETLRKYIYGGHVAEYMEMLIDDDEERYQKQFSGLIADGIESDQLEDIYAEAYAKIREDPSFQKSGKDAAAFKAESLKYTQRKLTAEERKERFNAKVIEAGRA.

It belongs to the universal ribosomal protein uL18 family. As to quaternary structure, component of the large ribosomal subunit (LSU). Mature yeast ribosomes consist of a small (40S) and a large (60S) subunit. The 40S small subunit contains 1 molecule of ribosomal RNA (18S rRNA) and 33 different proteins (encoded by 57 genes). The large 60S subunit contains 3 rRNA molecules (25S, 5.8S and 5S rRNA) and 46 different proteins (encoded by 81 genes). Component of a hexameric 5S RNP precursor complex, composed of 5S RNA, rrs1, rpf2, rpl5a/rpl5b, rpl11a/rpl11b and syo1; this complex acts as a precursor for ribosome assembly. rpl5a/rpl5b/uL18 forms a heterotrimeric complex with syo1 and rpl11a/rpl11b/uL5. Interaction of this complex with KAP104 allows the nuclear import of the heterotrimer.

It is found in the cytoplasm. The protein resides in the nucleus. Component of the ribosome, a large ribonucleoprotein complex responsible for the synthesis of proteins in the cell. The small ribosomal subunit (SSU) binds messenger RNAs (mRNAs) and translates the encoded message by selecting cognate aminoacyl-transfer RNA (tRNA) molecules. The large subunit (LSU) contains the ribosomal catalytic site termed the peptidyl transferase center (PTC), which catalyzes the formation of peptide bonds, thereby polymerizing the amino acids delivered by tRNAs into a polypeptide chain. The nascent polypeptides leave the ribosome through a tunnel in the LSU and interact with protein factors that function in enzymatic processing, targeting, and the membrane insertion of nascent chains at the exit of the ribosomal tunnel. In Schizosaccharomyces pombe (strain 972 / ATCC 24843) (Fission yeast), this protein is Large ribosomal subunit protein uL18B (rpl502).